The chain runs to 225 residues: Uracil-DNA glycosylase (225 aa).

Residue aspartate 65 is the Proton acceptor of the active site.

It belongs to the uracil-DNA glycosylase (UDG) superfamily. UNG family.

It is found in the cytoplasm. It catalyses the reaction Hydrolyzes single-stranded DNA or mismatched double-stranded DNA and polynucleotides, releasing free uracil.. Excises uracil residues from the DNA which can arise as a result of misincorporation of dUMP residues by DNA polymerase or due to deamination of cytosine. The polypeptide is Uracil-DNA glycosylase (Bacillus mycoides (strain KBAB4) (Bacillus weihenstephanensis)).